The primary structure comprises 349 residues: N-acetyl-gamma-glutamyl-phosphate reductase (349 aa).

Residue C149 is part of the active site.

It belongs to the NAGSA dehydrogenase family. Type 1 subfamily.

The protein localises to the cytoplasm. It carries out the reaction N-acetyl-L-glutamate 5-semialdehyde + phosphate + NADP(+) = N-acetyl-L-glutamyl 5-phosphate + NADPH + H(+). Its pathway is amino-acid biosynthesis; L-arginine biosynthesis; N(2)-acetyl-L-ornithine from L-glutamate: step 3/4. Catalyzes the NADPH-dependent reduction of N-acetyl-5-glutamyl phosphate to yield N-acetyl-L-glutamate 5-semialdehyde. The chain is N-acetyl-gamma-glutamyl-phosphate reductase from Acinetobacter baumannii (strain ACICU).